We begin with the raw amino-acid sequence, 293 residues long: 3-hydroxybutyrate-oligomer hydrolase (293 aa).

This sequence belongs to the AB hydrolase superfamily.

It is found in the cytoplasm. It catalyses the reaction (3R)-hydroxybutanoate pentamer + H2O = (3R)-hydroxybutanoate tetramer + (R)-3-hydroxybutanoate + H(+). It carries out the reaction (3R)-hydroxybutanoate tetramer + H2O = (3R)-hydroxybutanoate trimer + (R)-3-hydroxybutanoate + H(+). The catalysed reaction is (3R)-hydroxybutanoate trimer + H2O = (3R)-hydroxybutanoate dimer + (R)-3-hydroxybutanoate + H(+). The enzyme catalyses (3R)-hydroxybutanoate dimer + H2O = 2 (R)-3-hydroxybutanoate + H(+). It catalyses the reaction [(3R)-hydroxybutanoate](n) + H2O = [(3R)-hydroxybutanoate](n-1) + (R)-3-hydroxybutanoate + H(+). Its function is as follows. Catalyzes the degradation of various 3-hydroxybutyrate (3HB) oligomers at a high specific activity and artificial amorphous poly(3-hydroxybutyrate) (PHB) at a lower specific activity. Hydrolyzes the 3HB pentamer most efficiently than the tetramer, trimer and dimer. Does not hydrolyze native PHB granules and semicrystalline PHB. Participates in the mobilization of PHB along with other hydrolases. This chain is 3-hydroxybutyrate-oligomer hydrolase, found in Cupriavidus necator (strain ATCC 17699 / DSM 428 / KCTC 22496 / NCIMB 10442 / H16 / Stanier 337) (Ralstonia eutropha).